We begin with the raw amino-acid sequence, 454 residues long: tRNA modification GTPase MnmE (454 aa).

(6S)-5-formyl-5,6,7,8-tetrahydrofolate-binding residues include R23, E80, and K120. A TrmE-type G domain is found at G216–G377. N226 contacts K(+). Residues N226–S231, T245–T251, D270–G273, N335–D338, and S358–R360 each bind GTP. A Mg(2+)-binding site is contributed by S230. Residues T245, I247, and T250 each coordinate K(+). T251 lines the Mg(2+) pocket. K454 lines the (6S)-5-formyl-5,6,7,8-tetrahydrofolate pocket.

This sequence belongs to the TRAFAC class TrmE-Era-EngA-EngB-Septin-like GTPase superfamily. TrmE GTPase family. In terms of assembly, homodimer. Heterotetramer of two MnmE and two MnmG subunits. K(+) is required as a cofactor.

The protein resides in the cytoplasm. Exhibits a very high intrinsic GTPase hydrolysis rate. Involved in the addition of a carboxymethylaminomethyl (cmnm) group at the wobble position (U34) of certain tRNAs, forming tRNA-cmnm(5)s(2)U34. This chain is tRNA modification GTPase MnmE, found in Serratia proteamaculans (strain 568).